A 128-amino-acid polypeptide reads, in one-letter code: NADH-quinone oxidoreductase subunit A (128 aa).

3 helical membrane-spanning segments follow: residues 9–29 (FPIA…LALA), 68–88 (LLFI…VLLL), and 96–116 (LGWA…AGLV).

This sequence belongs to the complex I subunit 3 family. As to quaternary structure, NDH-1 is composed of 14 different subunits. Subunits NuoA, H, J, K, L, M, N constitute the membrane sector of the complex.

The protein localises to the cell inner membrane. It catalyses the reaction a quinone + NADH + 5 H(+)(in) = a quinol + NAD(+) + 4 H(+)(out). NDH-1 shuttles electrons from NADH, via FMN and iron-sulfur (Fe-S) centers, to quinones in the respiratory chain. The immediate electron acceptor for the enzyme in this species is believed to be ubiquinone. Couples the redox reaction to proton translocation (for every two electrons transferred, four hydrogen ions are translocated across the cytoplasmic membrane), and thus conserves the redox energy in a proton gradient. The sequence is that of NADH-quinone oxidoreductase subunit A from Anaeromyxobacter sp. (strain Fw109-5).